The primary structure comprises 567 residues: Geranylgeranyl transferase type-2 subunit alpha (567 aa).

PFTA repeat units lie at residues 44–78, 88–122, 124–158, 159–193, 207–241, and 363–397; these read LDESVLELTSQILGANPDFATLWNCRREVLQRLEV, LVKAELGFLESCLRVNPKSYGTWHHRCWLLGRLPE, NWARELELCARFLEVDERNFHCWDYRRFVASQAAV, PPAEELAFTDSLITRNFSNYSSWHYRSCLLPQLHP, VLLKELELVQNAFFTDPNDQSAWFYHRWLLGRADP, and VLQSELESCKELQELEPENKWCLLTIILLMRALDP. S98 is subject to Phosphoserine. 5 LRR repeats span residues 442 to 463, 464 to 486, 487 to 508, 509 to 530, and 534 to 555; these read DVRVLHLGHKDLTVLCHLEQLL, LVTHLDLSHNRLRALPPALAALR, CLEVLQANDNAIESLDGVTNLP, RLQELSLCNNRLQQPAVLQPLA, and RLVLLNLQDNPLCQAVGISEHL.

This sequence belongs to the protein prenyltransferase subunit alpha family. As to quaternary structure, heterotrimer composed of RABGGTA, RABGGTB and CHM; within this trimer, RABGGTA and RABGGTB form the catalytic component B, while CHM (component A) mediates peptide substrate binding. The Rab GGTase dimer (RGGT) interacts with CHM (component A) prior to Rab protein binding; the association is stabilized by geranylgeranyl pyrophosphate (GGpp). The CHM:RGGT:Rab complex is destabilized by GGpp. Interacts with non-phosphorylated form of RAB8A; phosphorylation of RAB8A disrupts this interaction.

It catalyses the reaction geranylgeranyl diphosphate + L-cysteinyl-[protein] = S-geranylgeranyl-L-cysteinyl-[protein] + diphosphate. Its activity is regulated as follows. The enzymatic reaction requires the aid of a Rab escort protein (also called component A), such as CHM. Catalyzes the transfer of a geranylgeranyl moiety from geranylgeranyl diphosphate to both cysteines of Rab proteins with the C-terminal sequence -XXCC, -XCXC and -CCXX, such as RAB1A, RAB3A, RAB5A and RAB7A. This Sus scrofa (Pig) protein is Geranylgeranyl transferase type-2 subunit alpha (RABGGTA).